The chain runs to 189 residues: MGVSVDVHQVYKYPFEQVVASFLRKYPNPMDKNVISVKIMEEKRDESTGVIYRKRIAICQNVVPEILRKSLSTLVILCWKKVSILKVPNIQLEEESWLNPRERNMAIRSHCLTWTQYASMKEESVFRESMENPNWTEFIQRGRISITGVGFLNCVLETFASTFLRQGAQKGIRIMEMLLKEQCGAPLAE.

One can recognise a PRELI/MSF1 domain in the interval methionine 1–leucine 187.

The chain is PRELI domain-containing protein 2 (PRELID2) from Homo sapiens (Human).